Reading from the N-terminus, the 111-residue chain is Vacuolar ATPase assembly integral membrane protein VMA21 (111 aa).

Residues 1–39 are Cytoplasmic-facing; the sequence is MATRRIVATEKSILEKDDHIGSSPAAGEKSNITPAVPLD. Residues 40 to 60 traverse the membrane as a helical segment; it reads VILKLLAFTLAMVVIPIGSYF. Residues 61-73 lie on the Lumenal side of the membrane; it reads VTVNSIFKGNSTY. Residues 74–94 traverse the membrane as a helical segment; it reads AGALAAIMANVVLVAYVVVAM. Residues 95-111 are Cytoplasmic-facing; that stretch reads NEDQTEQEKAKEGKKDR. The Prevents secretion from ER motif lies at 108-111; sequence KKDR.

The protein belongs to the VMA21 family.

It localises to the endoplasmic reticulum membrane. The protein localises to the endoplasmic reticulum-Golgi intermediate compartment membrane. It is found in the cytoplasmic vesicle. Its subcellular location is the COPII-coated vesicle membrane. In terms of biological role, required for the assembly of the V0 complex of the vacuolar ATPase (V-ATPase) in the endoplasmic reticulum. The sequence is that of Vacuolar ATPase assembly integral membrane protein VMA21 from Pyricularia oryzae (strain 70-15 / ATCC MYA-4617 / FGSC 8958) (Rice blast fungus).